A 279-amino-acid polypeptide reads, in one-letter code: Aquaporin A (279 aa).

Topologically, residues 1 to 40 are cytoplasmic; that stretch reads MVKVVPLRFITYDPLKDPSKMIYRRPISKPVKAFKGFFSE. A helical transmembrane segment spans residues 41–61; sequence FLGTLYLVYFCGGSVCAAFAV. Over 62 to 69 the chain is Extracellular; the sequence is AGDSAARA. The helical transmembrane segment at 70–90 threads the bilayer; it reads LLGGLIQGMALAALIWAVSGV. Over 91-114 the chain is Cytoplasmic; sequence SGCNLNPAVTLANLLSGRVGLIDS. An NPA 1 motif is present at residues 96 to 98; it reads NPA. Residues 115 to 135 traverse the membrane as a helical segment; that stretch reads LYYVAAQILGCIAGAGILYGC. Over 136–158 the chain is Extracellular; it reads LPNMYRIDLGVPHLAPGMNTGQA. The chain crosses the membrane as a helical span at residues 159 to 179; the sequence is FLMEMMLTSILCLCVLGTSVF. Residues 180-188 are Cytoplasmic-facing; it reads NVWDRRLNR. The chain crosses the membrane as a helical span at residues 189 to 209; sequence IAPFAIGLALFIGVAIGFNFS. Topologically, residues 210-227 are extracellular; it reads GGALNPVRVLGPSIISGV. Positions 214–216 match the NPA 2 motif; that stretch reads NPV. The chain crosses the membrane as a helical span at residues 228–248; sequence WSHHWVYWLGPIVGAILAAFI. Topologically, residues 249-279 are cytoplasmic; sequence YRCLLQERFDVIERPGYIAPLIDPSTAVSSY.

Belongs to the MIP/aquaporin (TC 1.A.8) family.

The protein resides in the cell membrane. Its function is as follows. May form a water-specific channel. Required for prolonged spore survival on fruiting bodies. The sequence is that of Aquaporin A (aqpA) from Dictyostelium discoideum (Social amoeba).